The chain runs to 115 residues: Ribonuclease P protein component (115 aa).

Belongs to the RnpA family. In terms of assembly, consists of a catalytic RNA component (M1 or rnpB) and a protein subunit.

The catalysed reaction is Endonucleolytic cleavage of RNA, removing 5'-extranucleotides from tRNA precursor.. In terms of biological role, RNaseP catalyzes the removal of the 5'-leader sequence from pre-tRNA to produce the mature 5'-terminus. It can also cleave other RNA substrates such as 4.5S RNA. The protein component plays an auxiliary but essential role in vivo by binding to the 5'-leader sequence and broadening the substrate specificity of the ribozyme. This Phytoplasma australiense protein is Ribonuclease P protein component.